The chain runs to 95 residues: Aspartyl/glutamyl-tRNA(Asn/Gln) amidotransferase subunit C (95 aa).

This sequence belongs to the GatC family. In terms of assembly, heterotrimer of A, B and C subunits.

The catalysed reaction is L-glutamyl-tRNA(Gln) + L-glutamine + ATP + H2O = L-glutaminyl-tRNA(Gln) + L-glutamate + ADP + phosphate + H(+). It catalyses the reaction L-aspartyl-tRNA(Asn) + L-glutamine + ATP + H2O = L-asparaginyl-tRNA(Asn) + L-glutamate + ADP + phosphate + 2 H(+). Its function is as follows. Allows the formation of correctly charged Asn-tRNA(Asn) or Gln-tRNA(Gln) through the transamidation of misacylated Asp-tRNA(Asn) or Glu-tRNA(Gln) in organisms which lack either or both of asparaginyl-tRNA or glutaminyl-tRNA synthetases. The reaction takes place in the presence of glutamine and ATP through an activated phospho-Asp-tRNA(Asn) or phospho-Glu-tRNA(Gln). In Methylobacterium sp. (strain 4-46), this protein is Aspartyl/glutamyl-tRNA(Asn/Gln) amidotransferase subunit C.